We begin with the raw amino-acid sequence, 903 residues long: DNA mismatch repair protein MutS (903 aa).

The interval 1-89 (MPRSASQPPD…DEPAWGHHSQ (89 aa)) is disordered. 2 stretches are compositionally biased toward low complexity: residues 20-36 (APEP…SEPE) and 49-62 (ADAA…QATA). 719 to 726 (GPNASGKS) serves as a coordination point for ATP.

Belongs to the DNA mismatch repair MutS family.

Its function is as follows. This protein is involved in the repair of mismatches in DNA. It is possible that it carries out the mismatch recognition step. This protein has a weak ATPase activity. The protein is DNA mismatch repair protein MutS of Synechococcus sp. (strain CC9605).